A 397-amino-acid polypeptide reads, in one-letter code: 1-deoxy-D-xylulose 5-phosphate reductoisomerase (397 aa).

Residues Thr-12, Gly-13, Ser-14, Ile-15, Gly-38, Lys-39, Asn-40, and Asn-126 each contribute to the NADPH site. Residue Lys-127 participates in 1-deoxy-D-xylulose 5-phosphate binding. Position 128 (Glu-128) interacts with NADPH. Residue Asp-152 participates in Mn(2+) binding. The 1-deoxy-D-xylulose 5-phosphate site is built by Ser-153, Glu-154, Ser-188, and His-211. Glu-154 serves as a coordination point for Mn(2+). Gly-217 is a binding site for NADPH. 1-deoxy-D-xylulose 5-phosphate-binding residues include Ser-224, Asn-229, Lys-230, and Glu-233. Glu-233 contacts Mn(2+).

This sequence belongs to the DXR family. Mg(2+) is required as a cofactor. It depends on Mn(2+) as a cofactor.

It catalyses the reaction 2-C-methyl-D-erythritol 4-phosphate + NADP(+) = 1-deoxy-D-xylulose 5-phosphate + NADPH + H(+). The protein operates within isoprenoid biosynthesis; isopentenyl diphosphate biosynthesis via DXP pathway; isopentenyl diphosphate from 1-deoxy-D-xylulose 5-phosphate: step 1/6. Its function is as follows. Catalyzes the NADPH-dependent rearrangement and reduction of 1-deoxy-D-xylulose-5-phosphate (DXP) to 2-C-methyl-D-erythritol 4-phosphate (MEP). This chain is 1-deoxy-D-xylulose 5-phosphate reductoisomerase, found in Haemophilus influenzae (strain PittGG).